A 592-amino-acid chain; its full sequence is Bifunctional purine biosynthesis protein ATIC (592 aa).

An N-acetylmethionine modification is found at Met-1. Residues 1–146 enclose the MGS-like domain; sequence MAPGHLALFS…KNHARVTVVC (146 aa). The interval 1–198 is IMP cyclohydrolase; the sequence is MAPGHLALFS…ISDYFRKQYS (198 aa). IMP contacts are provided by residues 12–14, 34–37, 64–67, 101–102, and 125–126; these read SDK, SGGT, RVKT, CN, and DI. The Proton donor/acceptor; for FAICAR cyclization activity role is filled by Lys-137. Lys-199 is subject to N6-acetyllysine. The AICAR formyltransferase stretch occupies residues 199-592; that stretch reads KGISQMPLRY…AHTNLRLFHH (394 aa). Residues 207–208, His-267, Gly-316, Asp-339, Asn-431, and Arg-451 contribute to the 5-amino-1-(5-phospho-beta-D-ribosyl)imidazole-4-carboxamide site; that span reads RY. His-267 functions as the Proton acceptor; for AICAR formyltransferase activity in the catalytic mechanism. Ile-452 contributes to the (6R)-10-formyltetrahydrofolate binding site. Residue Phe-541 coordinates 5-amino-1-(5-phospho-beta-D-ribosyl)imidazole-4-carboxamide. (6R)-10-formyltetrahydrofolate-binding positions include Asp-546 and 565–566; that span reads SA. Arg-588 serves as a coordination point for 5-amino-1-(5-phospho-beta-D-ribosyl)imidazole-4-carboxamide.

This sequence belongs to the PurH family. As to quaternary structure, homodimer. Associates with internalized INSR complexes on Golgi/endosomal membranes. Interacts with INSR; ATIC together with PRKAA2/AMPK2 and HACD3/PTPLAD1 is proposed to be part of a signaling network regulating INSR autophosphorylation and endocytosis.

Its subcellular location is the cytoplasm. The protein localises to the cytosol. It carries out the reaction (6R)-10-formyltetrahydrofolate + 5-amino-1-(5-phospho-beta-D-ribosyl)imidazole-4-carboxamide = 5-formamido-1-(5-phospho-D-ribosyl)imidazole-4-carboxamide + (6S)-5,6,7,8-tetrahydrofolate. The enzyme catalyses 10-formyldihydrofolate + 5-amino-1-(5-phospho-beta-D-ribosyl)imidazole-4-carboxamide = 5-formamido-1-(5-phospho-D-ribosyl)imidazole-4-carboxamide + 7,8-dihydrofolate. It catalyses the reaction IMP + H2O = 5-formamido-1-(5-phospho-D-ribosyl)imidazole-4-carboxamide. The protein operates within purine metabolism; IMP biosynthesis via de novo pathway; 5-formamido-1-(5-phospho-D-ribosyl)imidazole-4-carboxamide from 5-amino-1-(5-phospho-D-ribosyl)imidazole-4-carboxamide (10-formyl THF route): step 1/1. Its pathway is purine metabolism; IMP biosynthesis via de novo pathway; IMP from 5-formamido-1-(5-phospho-D-ribosyl)imidazole-4-carboxamide: step 1/1. AMP and XMP inhibit AICAR formyltransferase activity. In terms of biological role, bifunctional enzyme that catalyzes the last two steps of purine biosynthesis. Acts as a transformylase that incorporates a formyl group to the AMP analog AICAR (5-amino-1-(5-phospho-beta-D-ribosyl)imidazole-4-carboxamide) to produce the intermediate formyl-AICAR (FAICAR). Can use both 10-formyldihydrofolate and 10-formyltetrahydrofolate as the formyl donor in this reaction. Also catalyzes the cyclization of FAICAR to inosine monophosphate (IMP). Promotes insulin receptor/INSR autophosphorylation and is involved in INSR internalization. In Pongo abelii (Sumatran orangutan), this protein is Bifunctional purine biosynthesis protein ATIC (ATIC).